A 62-amino-acid polypeptide reads, in one-letter code: Light-harvesting protein B-870 alpha chain (62 aa).

Met-1 carries the post-translational modification N-formylmethionine. The Cytoplasmic segment spans residues 1-12 (MWRIWQLFDPRQ). A helical membrane pass occupies residues 13–33 (ALVGLATFLFVLALLIHFILL). Residue His-29 coordinates a bacteriochlorophyll. The Periplasmic portion of the chain corresponds to 34–52 (STERFNWLEGASTKPVQTS). Positions 53-62 (MVMPSSDLAV) are excised as a propeptide.

It belongs to the antenna complex alpha subunit family. The core complex is formed by different alpha and beta chains, binding bacteriochlorophyll molecules, and arranged most probably in tetrameric structures disposed around the reaction center. The non-pigmented gamma chains may constitute additional components.

The protein localises to the cell inner membrane. Antenna complexes are light-harvesting systems, which transfer the excitation energy to the reaction centers. The polypeptide is Light-harvesting protein B-870 alpha chain (Rhodospirillum rubrum).